Consider the following 376-residue polypeptide: Chorismate synthase (376 aa).

NADP(+) is bound by residues Arg39 and Arg45. Residues 115–117, Gly276, 291–295, and Arg317 each bind FMN; these read RSS and KPIPT.

Belongs to the chorismate synthase family. As to quaternary structure, homotetramer. FMNH2 serves as cofactor.

The catalysed reaction is 5-O-(1-carboxyvinyl)-3-phosphoshikimate = chorismate + phosphate. The protein operates within metabolic intermediate biosynthesis; chorismate biosynthesis; chorismate from D-erythrose 4-phosphate and phosphoenolpyruvate: step 7/7. Functionally, catalyzes the anti-1,4-elimination of the C-3 phosphate and the C-6 proR hydrogen from 5-enolpyruvylshikimate-3-phosphate (EPSP) to yield chorismate, which is the branch point compound that serves as the starting substrate for the three terminal pathways of aromatic amino acid biosynthesis. This reaction introduces a second double bond into the aromatic ring system. This is Chorismate synthase from Thermotoga maritima (strain ATCC 43589 / DSM 3109 / JCM 10099 / NBRC 100826 / MSB8).